A 243-amino-acid chain; its full sequence is 3-deoxy-manno-octulosonate cytidylyltransferase (243 aa).

This sequence belongs to the KdsB family.

It localises to the cytoplasm. It catalyses the reaction 3-deoxy-alpha-D-manno-oct-2-ulosonate + CTP = CMP-3-deoxy-beta-D-manno-octulosonate + diphosphate. It participates in nucleotide-sugar biosynthesis; CMP-3-deoxy-D-manno-octulosonate biosynthesis; CMP-3-deoxy-D-manno-octulosonate from 3-deoxy-D-manno-octulosonate and CTP: step 1/1. It functions in the pathway bacterial outer membrane biogenesis; lipopolysaccharide biosynthesis. Functionally, activates KDO (a required 8-carbon sugar) for incorporation into bacterial lipopolysaccharide in Gram-negative bacteria. The chain is 3-deoxy-manno-octulosonate cytidylyltransferase from Bartonella quintana (strain Toulouse) (Rochalimaea quintana).